A 644-amino-acid polypeptide reads, in one-letter code: Uromodulin (644 aa).

A signal peptide spans 1 to 26; it reads MGQLLSLTWLLLVMVVTPWFTVAGAN. The region spanning 30-66 is the EGF-like 1 domain; sequence EARRCSECHDNATCVLDGVVTTCSCQAGFTGDGLVCE. Intrachain disulfides connect cysteine 34–cysteine 43, cysteine 37–cysteine 52, cysteine 54–cysteine 65, cysteine 71–cysteine 84, cysteine 79–cysteine 93, cysteine 95–cysteine 107, cysteine 113–cysteine 127, cysteine 121–cysteine 136, cysteine 138–cysteine 149, cysteine 151–cysteine 162, cysteine 156–cysteine 173, cysteine 177–cysteine 270, cysteine 198–cysteine 285, cysteine 220–cysteine 258, cysteine 226–cysteine 290, cysteine 251–cysteine 259, cysteine 300–cysteine 309, cysteine 303–cysteine 318, cysteine 320–cysteine 350, cysteine 338–cysteine 428, and cysteine 369–cysteine 392. Asparagine 40 carries an N-linked (GlcNAc...) asparagine glycan. In terms of domain architecture, EGF-like 2; calcium-binding spans 67–108; sequence DIDECATPWTHNCSNSICMNTLGSYECSCQDGFRLTPGLGCI. Asparagine 78 carries N-linked (GlcNAc...) asparagine glycosylation. Positions 109–150 constitute an EGF-like 3; calcium-binding domain; that stretch reads DVNECTEQGLSNCHSLATCVNTEGSYSCVCPKGYRGDGWYCE. Residues 151–174 form a beta hairpin region; sequence CSPGFCEPGLDCLPQGPSGKLVCQ. The interval 175–294 is D10C; sequence DPCNVYETLT…CNLAYCTDPS (120 aa). N-linked (GlcNAc...) asparagine glycosylation occurs at asparagine 235. Asparagine 278 carries an N-linked (GlcNAc...) asparagine glycan. The EGF-like 4 domain maps to 295–326; sequence SVEGTCEECGVDEDCVSDNGRWRCQCKQDFNV. Residue asparagine 325 is glycosylated (N-linked (GlcNAc...) asparagine). The interval 337-432 is ZP-N; it reads ECEANEIKIS…RINFECSYPL (96 aa). In terms of domain architecture, ZP spans 337 to 592; it reads ECEANEIKIS…PTCSGTRYRS (256 aa). Asparagine 399 and asparagine 450 each carry an N-linked (GlcNAc...) asparagine glycan. The tract at residues 433–456 is flexible ZP-N/ZP-C linker; important for secretion and polymerization into filaments; sequence DMKVSLKTSLQPMVSALNISLGGT. Residues 457–467 form an internal hydrophobic patch (IHP) region; that stretch reads GKFTVQMALFQ. Residues 457-592 form a ZP-C region; sequence GKFTVQMALF…PTCSGTRYRS (136 aa). Intrachain disulfides connect cysteine 509/cysteine 569, cysteine 530/cysteine 585, and cysteine 574/cysteine 581. N-linked (GlcNAc...) asparagine glycosylation is present at asparagine 516. Residues 589–592 form an essential for cleavage by HPN region; the sequence is RYRS. The segment at 601–609 is external hydrophobic patch (EHP); regulates polymerization into filaments; it reads VLNLGPITR. A lipid anchor (GPI-anchor amidated serine) is attached at serine 615. Positions 616 to 644 are cleaved as a propeptide — removed in mature form; sequence VSKAASSNLGFLSIWLLLFLSATLTLMVH.

As to quaternary structure, homodimer that then polymerizes into long filaments. The filaments can additionally assemble laterally to form a sheet. The filaments consist of a zigzag-shaped backbone with laterally protruding arms which interact with bacterial adhesin fimH. Two fimH molecules can bind to a single UMOD monomer. Post-translationally, N-glycosylated. Proteolytically cleaved at a conserved C-terminal proteolytic cleavage site to generate the secreted form found in urine. This cleavage is catalyzed by HPN. Expression restricted to the thick ascending limb of the loop of Henle (TALH).

The protein resides in the apical cell membrane. It is found in the basolateral cell membrane. The protein localises to the cell projection. It localises to the cilium membrane. Its subcellular location is the secreted. Functionally, functions in biogenesis and organization of the apical membrane of epithelial cells of the thick ascending limb of Henle's loop (TALH), where it promotes formation of complex filamentous gel-like structure that may play a role in the water barrier permeability. May serve as a receptor for binding and endocytosis of cytokines (IL-1, IL-2) and TNF. Facilitates neutrophil migration across renal epithelia. Its function is as follows. In the urine, may contribute to colloid osmotic pressure, retards passage of positively charged electrolytes, and inhibits formation of liquid containing supersaturated salts and subsequent formation of salt crystals. Protects against urinary tract infections by binding to type 1 fimbriated E.coli. Binds to bacterial adhesin fimH which mediates the stable formation of bacterial aggregates, prevents the binding of E.coli to uroplakins UPK1A and UPK1B which act as urothelial receptors for type I fimbriae, and allows for pathogen clearance through micturation. Also promotes aggregation of other bacteria including K.pneumoniae, P.aeruginosa and S.mitis and so may also protect against other uropathogens. The chain is Uromodulin (Umod) from Rattus norvegicus (Rat).